The following is a 466-amino-acid chain: Phosphomethylpyrimidine synthase (466 aa).

Residues Asn80, Met109, Tyr139, His175, 195–197 (SRG), 236–239 (DSLR), and Glu275 contribute to the substrate site. Zn(2+) is bound at residue His279. Tyr302 provides a ligand contact to substrate. His343 serves as a coordination point for Zn(2+). The [4Fe-4S] cluster site is built by Cys423, Cys426, and Cys431.

The protein belongs to the ThiC family. It depends on [4Fe-4S] cluster as a cofactor.

It carries out the reaction 5-amino-1-(5-phospho-beta-D-ribosyl)imidazole + S-adenosyl-L-methionine = 4-amino-2-methyl-5-(phosphooxymethyl)pyrimidine + CO + 5'-deoxyadenosine + formate + L-methionine + 3 H(+). Its pathway is cofactor biosynthesis; thiamine diphosphate biosynthesis. Catalyzes the synthesis of the hydroxymethylpyrimidine phosphate (HMP-P) moiety of thiamine from aminoimidazole ribotide (AIR) in a radical S-adenosyl-L-methionine (SAM)-dependent reaction. The chain is Phosphomethylpyrimidine synthase from Synechococcus sp. (strain CC9902).